A 365-amino-acid polypeptide reads, in one-letter code: P43 5S RNA-binding protein (365 aa).

C2H2-type zinc fingers lie at residues 15–39 (FRCPAAGCKAVYRKEGKLRDHMAGH), 45–69 (WKCGKKDCGKMFARKRQIQKHMKRH), 75–100 (HSCPTAGCKMTFSTKKSLSRHKLYKH), 106–130 (LKCSVPGCKRSFRKKRALRIHVSEH), 136–160 (SVCDVPGCGWKSTSAAKLAAHHRRH), 163–187 (YRCSYEDCQTVSPTWTALQTHLKKH), 191–213 (LQCAACKKPFKKASALRRHKATH), 220–245 (LPCPRQDCDKIFSTVFNLTHHLRKVH), and 251–275 (HRCPHSNCTRSFAMRESLVRHLVVH).

In terms of assembly, the 42S RNP particle comprises four subunits each of which contains one molecule of 5S RNA, three molecules of tRNA, two molecules of p50 (EF1-alpha) and one molecule of the 5S RNA binding protein 43.

Functionally, p43 is a 5S RNA binding protein which is a major constituent of oocytes and comprises part of a 42S ribonucleoprotein storage particle. The chain is P43 5S RNA-binding protein from Xenopus borealis (Kenyan clawed frog).